The following is a 130-amino-acid chain: Anti-adapter protein IraD (130 aa).

Belongs to the GpW/Gp25 family. IraD subfamily. In terms of assembly, interacts with RssB.

It is found in the cytoplasm. Inhibits RpoS proteolysis by regulating RssB activity, thereby increasing the stability of the sigma stress factor RpoS during oxidative stress. Its effect on RpoS stability is due to its interaction with RssB, which probably blocks the interaction of RssB with RpoS, and the consequent delivery of the RssB-RpoS complex to the ClpXP protein degradation pathway. This Escherichia coli O157:H7 protein is Anti-adapter protein IraD.